The primary structure comprises 443 residues: Phosphoglucosamine mutase (443 aa).

Catalysis depends on Ser101, which acts as the Phosphoserine intermediate. Mg(2+) is bound by residues Ser101, Asp239, Asp241, and Asp243. Ser101 is modified (phosphoserine).

It belongs to the phosphohexose mutase family. The cofactor is Mg(2+). Activated by phosphorylation.

It catalyses the reaction alpha-D-glucosamine 1-phosphate = D-glucosamine 6-phosphate. Its function is as follows. Catalyzes the conversion of glucosamine-6-phosphate to glucosamine-1-phosphate. The chain is Phosphoglucosamine mutase from Francisella tularensis subsp. tularensis (strain FSC 198).